The following is a 1020-amino-acid chain: UPF0182 protein jk1603 (1020 aa).

The span at 1–18 (MSTPTPPSSGRPKQPFPS) shows a compositional bias: pro residues. The segment at 1-23 (MSTPTPPSSGRPKQPFPSSPGSS) is disordered. The next 7 membrane-spanning stretches (helical) occupy residues 28–48 (ILGI…VVVS), 73–93 (LVLF…AAFL), 125–145 (FLVG…QSNW), 175–195 (LPFL…AFVI), 227–247 (LAVI…FDRY), 272–292 (QIVL…TIVL), and 300–320 (LAVA…PAML). A disordered region spans residues 924 to 998 (QEIDGSVVDP…KVNKTRESGT (75 aa)). Basic and acidic residues-rich tracts occupy residues 942–961 (KGDK…EQSS) and 969–998 (KSDD…ESGT).

This sequence belongs to the UPF0182 family.

The protein localises to the cell membrane. In Corynebacterium jeikeium (strain K411), this protein is UPF0182 protein jk1603.